A 445-amino-acid chain; its full sequence is tRNA modification GTPase MnmE (445 aa).

3 residues coordinate (6S)-5-formyl-5,6,7,8-tetrahydrofolate: arginine 20, glutamate 79, and lysine 119. The TrmE-type G domain occupies 215-371 (GLKLAIIGPP…ILKNIEEIAE (157 aa)). Asparagine 225 contributes to the K(+) binding site. Residues 225 to 230 (NAGKSS), 244 to 250 (SNIAGTT), and 269 to 272 (DTAG) each bind GTP. Residue serine 229 coordinates Mg(2+). K(+)-binding residues include serine 244, isoleucine 246, and threonine 249. Mg(2+) is bound at residue threonine 250. Lysine 445 provides a ligand contact to (6S)-5-formyl-5,6,7,8-tetrahydrofolate.

The protein belongs to the TRAFAC class TrmE-Era-EngA-EngB-Septin-like GTPase superfamily. TrmE GTPase family. As to quaternary structure, homodimer. Heterotetramer of two MnmE and two MnmG subunits. It depends on K(+) as a cofactor.

Its subcellular location is the cytoplasm. Functionally, exhibits a very high intrinsic GTPase hydrolysis rate. Involved in the addition of a carboxymethylaminomethyl (cmnm) group at the wobble position (U34) of certain tRNAs, forming tRNA-cmnm(5)s(2)U34. The protein is tRNA modification GTPase MnmE of Rickettsia bellii (strain OSU 85-389).